Reading from the N-terminus, the 353-residue chain is 4-hydroxy-2-oxovalerate aldolase 2 (353 aa).

Residues 14 to 266 (VRMTDTSLRD…KTGIDFFDIA (253 aa)) enclose the Pyruvate carboxyltransferase domain. 22–23 (RD) is a binding site for substrate. A Mn(2+)-binding site is contributed by D23. H26 (proton acceptor) is an active-site residue. Residues S176 and H205 each coordinate substrate. Mn(2+) is bound by residues H205 and H207. Y296 is a substrate binding site.

This sequence belongs to the 4-hydroxy-2-oxovalerate aldolase family.

The catalysed reaction is (S)-4-hydroxy-2-oxopentanoate = acetaldehyde + pyruvate. This Mycobacterium sp. (strain JLS) protein is 4-hydroxy-2-oxovalerate aldolase 2.